The sequence spans 131 residues: Large ribosomal subunit protein bL17 (131 aa).

This sequence belongs to the bacterial ribosomal protein bL17 family. As to quaternary structure, part of the 50S ribosomal subunit. Contacts protein L32.

This is Large ribosomal subunit protein bL17 from Methylibium petroleiphilum (strain ATCC BAA-1232 / LMG 22953 / PM1).